Consider the following 239-residue polypeptide: Pentatricopeptide repeat-containing protein DWY1, chloroplastic (239 aa).

The N-terminal 35 residues, 1–35 (MALEAAFSMSFCSFSVPKAIFCERETSSFQRITSR), are a transit peptide targeting the chloroplast. Disordered regions lie at residues 40 to 59 (AGESQVQSSDGVETQVKETS) and 101 to 122 (HISPSSHSTKVRGDKPEISGGE). The span at 111–122 (VRGDKPEISGGE) shows a compositional bias: basic and acidic residues. The interval 113–144 (GDKPEISGGEKKAIVDRSKAYVKLKSLGKEVR) is type E(+) motif. The interval 145-239 (DAGYVPETKY…DGNCSCGDYW (95 aa)) is type DYW motif.

The protein belongs to the PPR family. PCMP-H subfamily. In terms of assembly, interacts with CRR4. It depends on Zn(2+) as a cofactor.

It localises to the plastid. It is found in the chloroplast. Plays a major role in single RNA editing events in chloroplasts. Acts as a site-recognition transacting factor involved in the edition of the site 1 of ndhD (ndhD-1 site corresponding to cytidine-2), which is a plastid-encoded subunit of the NADH-plastoquinone oxidoreductase. The interaction with CRR4 is required for its function in editing the ndhD-1 site. In Arabidopsis thaliana (Mouse-ear cress), this protein is Pentatricopeptide repeat-containing protein DWY1, chloroplastic.